Here is a 513-residue protein sequence, read N- to C-terminus: MQLNSTEIAELIKQRIAQFDIKSEARNEGTIVSVSDGIIRIHGLADAMQGEMIELPGNRYALALNLERDSVGAVIMGSYDGLSEGMKVKGTGRILEVPVGRGLLGRVLNTLGQPIDGKGPIDNDGFSPIEVIAPGVIERKSVDQPVQTGLKAIDAMIPIGRGQRELIIGDRQVGKTAIAIDTIINQKDSGIKCVYVAIGQKASTIANVVRKLEEHGALANTIVVVASASEAAALQYLAPYAGCSMGEYFRDRGEDALIIYDDLSKQAVAYRQISLLLRRPPGREAYPGDVFYLHSRLLERAARVNAEYVEKFTNGAVKGQTGSLTALPIIETQAGDVSAFVPTNVISITDGQIFLTSQLFNSGIRPAVDPGISVSRVGGAAQTKIVKKLSGGIRTALAQYRELAAFAQFSSDLDDATRKQLDHGQKVTELMKQKQYSPLSVAHQSLVLFAAEKGYLSDVELNKIVDFEAALLSYANTQHAELMAEINAKADYNDAIVGKLTALLDDFKATQTW.

169–176 (GDRQVGKT) lines the ATP pocket.

Belongs to the ATPase alpha/beta chains family. As to quaternary structure, F-type ATPases have 2 components, CF(1) - the catalytic core - and CF(0) - the membrane proton channel. CF(1) has five subunits: alpha(3), beta(3), gamma(1), delta(1), epsilon(1). CF(0) has three main subunits: a(1), b(2) and c(9-12). The alpha and beta chains form an alternating ring which encloses part of the gamma chain. CF(1) is attached to CF(0) by a central stalk formed by the gamma and epsilon chains, while a peripheral stalk is formed by the delta and b chains.

It is found in the cell inner membrane. The catalysed reaction is ATP + H2O + 4 H(+)(in) = ADP + phosphate + 5 H(+)(out). Its function is as follows. Produces ATP from ADP in the presence of a proton gradient across the membrane. The alpha chain is a regulatory subunit. The sequence is that of ATP synthase subunit alpha from Aeromonas hydrophila subsp. hydrophila (strain ATCC 7966 / DSM 30187 / BCRC 13018 / CCUG 14551 / JCM 1027 / KCTC 2358 / NCIMB 9240 / NCTC 8049).